Reading from the N-terminus, the 585-residue chain is Protein cereblon (585 aa).

2 disordered regions span residues 1–109 and 156–195; these read MDEE…DLES and FSQERRRSRTSEETSQEAAEQPVDPPPQQPPRPPIDIGFD. The span at 80–95 shows a compositional bias: polar residues; that stretch reads QDDTASEGSHPSSDMS. Residues 158-167 are compositionally biased toward basic and acidic residues; it reads QERRRSRTSE. The segment covering 178–189 has biased composition (pro residues); that stretch reads VDPPPQQPPRPP. The Lon N-terminal domain occupies 225-451; sequence HMLIFLHQHI…LIKSTFKDET (227 aa). One can recognise a CULT domain in the interval 450 to 559; that stretch reads ETLFFCRYCN…LAGSSVRIGK (110 aa). The Zn(2+) site is built by C455, C458, C524, and C527.

This sequence belongs to the CRBN family. Likely a component of a DCX (DDB1-CUL4-X-box) protein ligase complex. May interact with pic/DDB1. Ubiquitinated. As to expression, expressed in the fat body (at protein level).

It is found in the nucleus. It functions in the pathway protein modification; protein ubiquitination. In terms of biological role, substrate recognition component of a DCX (DDB1-CUL4-X-box) E3 protein ligase complex that mediates the ubiquitination and subsequent proteasomal degradation of target proteins. Has an essential role in mediating growth by negatively regulating insulin signaling. It also has a role in maintaining presynaptic function in the neuromuscular junction synapses of third-instar larvae. The protein is Protein cereblon of Drosophila melanogaster (Fruit fly).